The primary structure comprises 387 residues: Ferrochelatase (387 aa).

The interval 1 to 318 (MGRVGVLLLN…VFIDALAQMV (318 aa)) is ferrochelatase. Fe cation is bound by residues H196 and E277. The segment at 319-387 (MDSLNDPPCT…QGPLHFVGLL (69 aa)) is hlip domain.

In the N-terminal section; belongs to the ferrochelatase family. This sequence in the C-terminal section; belongs to the Hlip family.

It localises to the cytoplasm. It catalyses the reaction heme b + 2 H(+) = protoporphyrin IX + Fe(2+). Its pathway is porphyrin-containing compound metabolism; protoheme biosynthesis; protoheme from protoporphyrin-IX: step 1/1. Catalyzes the ferrous insertion into protoporphyrin IX. In terms of biological role, the Hlip proteins might regulate tetrapyrrole biosynthesis, maybe at the level of aminolevulinic acid synthesis. Deletion of 4 to 5 members of the Hlip family (always including this member) suggests the proteins are involved in regulation of chlorophyll biosynthesis, in stabilization of chlorophyll-binding proteins and/or in reuse of chlorophylls, and may regulate tetrapyrrole biosynthesis. The Hlip proteins probably stabilize PSII assembly intermediates. The chain is Ferrochelatase from Synechocystis sp. (strain ATCC 27184 / PCC 6803 / Kazusa).